Reading from the N-terminus, the 463-residue chain is Methionine aminopeptidase 2-1 (463 aa).

Positions 1–12 are enriched in basic and acidic residues; the sequence is MGSKTPDGHRQG. Residues 1-96 form a disordered region; it reads MGSKTPDGHR…SGQQTTPPRV (96 aa). A compositionally biased stretch (acidic residues) spans 41–53; the sequence is SGEDDEDGDDDEE. The span at 58–67 shows a compositional bias: polar residues; that stretch reads DLNSRAQPNN. Residues 70–85 are compositionally biased toward basic residues; it reads KKRKRKNNKKKKKKRP. Position 215 (His-215) interacts with substrate. 3 residues coordinate a divalent metal cation: Asp-236, Asp-247, and His-316. His-324 is a binding site for substrate. Positions 349 and 444 each coordinate a divalent metal cation.

It belongs to the peptidase M24A family. Methionine aminopeptidase eukaryotic type 2 subfamily. Co(2+) is required as a cofactor. The cofactor is Zn(2+). It depends on Mn(2+) as a cofactor. Fe(2+) serves as cofactor.

The protein localises to the cytoplasm. The enzyme catalyses Release of N-terminal amino acids, preferentially methionine, from peptides and arylamides.. In terms of biological role, cotranslationally removes the N-terminal methionine from nascent proteins. The N-terminal methionine is often cleaved when the second residue in the primary sequence is small and uncharged (Met-Ala-, Cys, Gly, Pro, Ser, Thr, or Val). In Arthroderma otae (strain ATCC MYA-4605 / CBS 113480) (Microsporum canis), this protein is Methionine aminopeptidase 2-1.